Consider the following 424-residue polypeptide: F-box protein At2g38590 (424 aa).

Residues 2 to 47 form the F-box domain; that stretch reads TTMISNLPRVLIEEIFFRVPLKSLRAVRLTCKSWNTLSKSRSFRKL.

The protein is F-box protein At2g38590 of Arabidopsis thaliana (Mouse-ear cress).